A 703-amino-acid chain; its full sequence is Cyclic AMP-dependent transcription factor ATF-6 beta (703 aa).

Residue alanine 2 is modified to N-acetylalanine. The segment at 2–86 is transcription activation; it reads AELMLLSEIA…ELLPIFPDLQ (85 aa). The Cytoplasmic segment spans residues 2 to 396; that stretch reads AELMLLSEIA…ELKLGSGNRK (395 aa). Disordered regions lie at residues 87 to 114, 229 to 248, and 293 to 317; these read VKSE…PSSE, LDGS…QPKP, and EGPA…GNSC. Residues 89 to 114 are compositionally biased toward low complexity; sequence SEPSSPCSSSSLSSESSRLSTEPSSE. In terms of domain architecture, bZIP spans 325–388; it reads LLKRQQRMIK…EALLAENSEL (64 aa). A basic motif region spans residues 327–347; sequence KRQQRMIKNRESACQSRRKKK. Residues 350 to 357 are leucine-zipper; that stretch reads LQGLEARL. The chain crosses the membrane as a helical; Signal-anchor for type II membrane protein span at residues 397 to 417; sequence VVCIMVFLLFIAFNFGPVSIS. The Lumenal segment spans residues 418 to 703; it reads EPPSAPISPR…SHQPLYLNHP (286 aa). Residues 447 to 479 form a disordered region; that stretch reads PVQGVEPLQGSSQGPKEPQPSPTDQPSFSNLTA. 2 N-linked (GlcNAc...) asparagine glycosylation sites follow: asparagine 476 and asparagine 505. The tract at residues 521–565 is disordered; sequence QRHQRGRRKIPQRAQERQKSQPRKKSPPVKAVPIQPPGPPERDSV. Residues 522–531 are compositionally biased toward basic residues; it reads RHQRGRRKIP. N-linked (GlcNAc...) asparagine glycans are attached at residues asparagine 610, asparagine 627, and asparagine 676. The span at 660–676 shows a compositional bias: polar residues; sequence STVPPSLRKQPSPTPGN. The segment at 660–703 is disordered; sequence STVPPSLRKQPSPTPGNATGGPLPVSAASQAHQASHQPLYLNHP. Over residues 685–696 the composition is skewed to low complexity; that stretch reads SAASQAHQASHQ.

It belongs to the bZIP family. ATF subfamily. Homodimer and heterodimer with ATF6-alpha. The dimer interacts with the nuclear transcription factor Y (NF-Y) trimer through direct binding to NF-Y subunit C (NF-YC). In terms of processing, N-glycosylated. Post-translationally, during unfolded protein response, a fragment of approximately 60 kDa containing the cytoplasmic transcription factor domain is released by proteolysis. The cleavage is probably performed sequentially by site-1 (MBTPS1, S1P) and site-2 (MBTPS2, S2P) proteases. Ubiquitous.

The protein localises to the endoplasmic reticulum membrane. Its subcellular location is the nucleus. Its function is as follows. Precursor of the transcription factor form (Processed cyclic AMP-dependent transcription factor ATF-6 beta), which is embedded in the endoplasmic reticulum membrane. Endoplasmic reticulum stress promotes processing of this form, releasing the transcription factor form that translocates into the nucleus, where it activates transcription of genes involved in the unfolded protein response (UPR). Functionally, transcription factor that acts in the unfolded protein response (UPR) pathway by activating UPR target genes induced during ER stress. Binds DNA on the 5'-CCAC[GA]-3' half of the ER stress response element (ERSE) (5'-CCAATN(9)CCAC[GA]-3') when NF-Y is bound to ERSE. This chain is Cyclic AMP-dependent transcription factor ATF-6 beta (ATF6B), found in Homo sapiens (Human).